The chain runs to 244 residues: MSFMSRVLLGVNIDHIATLRQARGTRYPEPVQAALVAEQAGADGITVHLREDRRHINDRDVELLAQTLQTRMNLEMAATEEMVVIACRIQPPHCCLVPEKREELTTEGGLDVVGNKAWIAQCCQRLGQAGIEVSLFIDAEESQILAARECGAPAIEIHTGGYADAQTIDQQQQELARIRSAVAFALAQGLIVNAGHGLHYHNTLAIAEIPGINELNIGHSIIARAAITGLDEAVRSMRSLLDTV.

Asn-12 lines the 3-amino-2-oxopropyl phosphate pocket. 14–15 (DH) serves as a coordination point for 1-deoxy-D-xylulose 5-phosphate. Position 23 (Arg-23) interacts with 3-amino-2-oxopropyl phosphate. His-48 (proton acceptor) is an active-site residue. Residues Arg-50 and His-55 each coordinate 1-deoxy-D-xylulose 5-phosphate. Glu-75 serves as the catalytic Proton acceptor. Thr-105 provides a ligand contact to 1-deoxy-D-xylulose 5-phosphate. The Proton donor role is filled by His-196. 3-amino-2-oxopropyl phosphate contacts are provided by residues Gly-197 and 218–219 (GH).

This sequence belongs to the PNP synthase family. As to quaternary structure, homooctamer; tetramer of dimers.

Its subcellular location is the cytoplasm. The enzyme catalyses 3-amino-2-oxopropyl phosphate + 1-deoxy-D-xylulose 5-phosphate = pyridoxine 5'-phosphate + phosphate + 2 H2O + H(+). The protein operates within cofactor biosynthesis; pyridoxine 5'-phosphate biosynthesis; pyridoxine 5'-phosphate from D-erythrose 4-phosphate: step 5/5. Catalyzes the complicated ring closure reaction between the two acyclic compounds 1-deoxy-D-xylulose-5-phosphate (DXP) and 3-amino-2-oxopropyl phosphate (1-amino-acetone-3-phosphate or AAP) to form pyridoxine 5'-phosphate (PNP) and inorganic phosphate. This Alcanivorax borkumensis (strain ATCC 700651 / DSM 11573 / NCIMB 13689 / SK2) protein is Pyridoxine 5'-phosphate synthase.